The chain runs to 284 residues: Shikimate dehydrogenase (NADP(+)) (284 aa).

Shikimate-binding positions include serine 20–serine 22 and serine 67. The active-site Proton acceptor is the lysine 71. NADP(+) is bound at residue aspartate 83. Positions 92 and 107 each coordinate shikimate. NADP(+) contacts are provided by residues glycine 129–alanine 133 and isoleucine 227. Shikimate is bound at residue tyrosine 229. Glycine 250 contributes to the NADP(+) binding site.

Belongs to the shikimate dehydrogenase family. In terms of assembly, homodimer.

It catalyses the reaction shikimate + NADP(+) = 3-dehydroshikimate + NADPH + H(+). The protein operates within metabolic intermediate biosynthesis; chorismate biosynthesis; chorismate from D-erythrose 4-phosphate and phosphoenolpyruvate: step 4/7. Its function is as follows. Involved in the biosynthesis of the chorismate, which leads to the biosynthesis of aromatic amino acids. Catalyzes the reversible NADPH linked reduction of 3-dehydroshikimate (DHSA) to yield shikimate (SA). This chain is Shikimate dehydrogenase (NADP(+)), found in Streptococcus pneumoniae (strain ATCC 700669 / Spain 23F-1).